Consider the following 81-residue polypeptide: Putative membrane protein insertion efficiency factor (81 aa).

The segment at 61-81 (NDGGYDPVPPAPSSRTSSIAE) is disordered.

Belongs to the UPF0161 family.

The protein localises to the cell inner membrane. Its function is as follows. Could be involved in insertion of integral membrane proteins into the membrane. The chain is Putative membrane protein insertion efficiency factor from Pseudomonas putida (strain ATCC 47054 / DSM 6125 / CFBP 8728 / NCIMB 11950 / KT2440).